Reading from the N-terminus, the 37-residue chain is Cytochrome b6-f complex subunit 5 (37 aa).

Residues 5 to 25 (LLSGIVLGLIPITLAGLFVTA) traverse the membrane as a helical segment.

Belongs to the PetG family. As to quaternary structure, the 4 large subunits of the cytochrome b6-f complex are cytochrome b6, subunit IV (17 kDa polypeptide, PetD), cytochrome f and the Rieske protein, while the 4 small subunits are PetG, PetL, PetM and PetN. The complex functions as a dimer.

It is found in the plastid. It localises to the chloroplast thylakoid membrane. Functionally, component of the cytochrome b6-f complex, which mediates electron transfer between photosystem II (PSII) and photosystem I (PSI), cyclic electron flow around PSI, and state transitions. PetG is required for either the stability or assembly of the cytochrome b6-f complex. In Zygnema circumcarinatum (Green alga), this protein is Cytochrome b6-f complex subunit 5.